Reading from the N-terminus, the 356-residue chain is Methionine import ATP-binding protein MetN 1 (356 aa).

One can recognise an ABC transporter domain in the interval Ile-15–Leu-254. Gly-51–Ser-58 is a binding site for ATP.

The protein belongs to the ABC transporter superfamily. Methionine importer (TC 3.A.1.24) family. In terms of assembly, the complex is composed of two ATP-binding proteins (MetN), two transmembrane proteins (MetI) and a solute-binding protein (MetQ).

Its subcellular location is the cell inner membrane. The catalysed reaction is L-methionine(out) + ATP + H2O = L-methionine(in) + ADP + phosphate + H(+). The enzyme catalyses D-methionine(out) + ATP + H2O = D-methionine(in) + ADP + phosphate + H(+). Part of the ABC transporter complex MetNIQ involved in methionine import. Responsible for energy coupling to the transport system. The polypeptide is Methionine import ATP-binding protein MetN 1 (Acinetobacter baylyi (strain ATCC 33305 / BD413 / ADP1)).